A 165-amino-acid chain; its full sequence is 3-isopropylmalate dehydratase small subunit (165 aa).

Belongs to the LeuD family. LeuD type 2 subfamily. As to quaternary structure, heterodimer of LeuC and LeuD.

It carries out the reaction (2R,3S)-3-isopropylmalate = (2S)-2-isopropylmalate. The protein operates within amino-acid biosynthesis; L-leucine biosynthesis; L-leucine from 3-methyl-2-oxobutanoate: step 2/4. Catalyzes the isomerization between 2-isopropylmalate and 3-isopropylmalate, via the formation of 2-isopropylmaleate. The polypeptide is 3-isopropylmalate dehydratase small subunit (Halothermothrix orenii (strain H 168 / OCM 544 / DSM 9562)).